The sequence spans 483 residues: Alpha-tubulin N-acetyltransferase (483 aa).

Residues 1–186 enclose the N-acetyltransferase domain; the sequence is MEFRFNMHPL…NNFVVYEGFF (186 aa). Acetyl-CoA is bound by residues 120-133 and 156-165; these read FYVHESRQRGGLGR and SEKLLGFLQK. Disordered regions lie at residues 204-231, 330-395, and 437-472; these read TASPNTNLFGPTFTTTEERRRSTSQTRT, ETLP…VLGS, and SVKINRPIGKSGTRGSLHDDNESVHSNGSQQGGGGH. Residues 347–369 show a composition bias toward basic and acidic residues; sequence YDFHPHHLELHDDTEGGGSHRDQ. Residues 370 to 383 are compositionally biased toward low complexity; it reads SLSPQSVSQQASPV.

This sequence belongs to the acetyltransferase ATAT1 family.

The catalysed reaction is L-lysyl-[alpha-tubulin] + acetyl-CoA = N(6)-acetyl-L-lysyl-[alpha-tubulin] + CoA + H(+). Its function is as follows. Specifically acetylates 'Lys-40' in alpha-tubulin on the lumenal side of microtubules. Promotes microtubule destabilization and accelerates microtubule dynamics; this activity may be independent of acetylation activity. Acetylates alpha-tubulin with a slow enzymatic rate, due to a catalytic site that is not optimized for acetyl transfer. Enters the microtubule through each end and diffuses quickly throughout the lumen of microtubules. Acetylates only long/old microtubules because of its slow acetylation rate since it does not have time to act on dynamically unstable microtubules before the enzyme is released. The chain is Alpha-tubulin N-acetyltransferase from Anopheles gambiae (African malaria mosquito).